The sequence spans 945 residues: Isoleucine--tRNA ligase (945 aa).

Residues 66–76 (PYANGDIHLGH) carry the 'HIGH' region motif. Residue E581 coordinates L-isoleucyl-5'-AMP. The 'KMSKS' region signature appears at 622-626 (KMSKS). K625 is an ATP binding site. Zn(2+) is bound by residues C908, C911, C928, and C931.

It belongs to the class-I aminoacyl-tRNA synthetase family. IleS type 1 subfamily. In terms of assembly, monomer. Zn(2+) serves as cofactor.

Its subcellular location is the cytoplasm. It catalyses the reaction tRNA(Ile) + L-isoleucine + ATP = L-isoleucyl-tRNA(Ile) + AMP + diphosphate. Its function is as follows. Catalyzes the attachment of isoleucine to tRNA(Ile). As IleRS can inadvertently accommodate and process structurally similar amino acids such as valine, to avoid such errors it has two additional distinct tRNA(Ile)-dependent editing activities. One activity is designated as 'pretransfer' editing and involves the hydrolysis of activated Val-AMP. The other activity is designated 'posttransfer' editing and involves deacylation of mischarged Val-tRNA(Ile). The protein is Isoleucine--tRNA ligase of Burkholderia ambifaria (strain MC40-6).